We begin with the raw amino-acid sequence, 558 residues long: Atlastin-1 (558 aa).

The interval 1-27 (MAKNRRDRNSWGGFSEKTYEWSSEEEE) is disordered. Positions 1-34 (MAKNRRDRNSWGGFSEKTYEWSSEEEEPVKKAGP) are N-terminal hypervariable region (HVR). Residues 1 to 449 (MAKNRRDRNS…NIFHAARTPA (449 aa)) lie on the Cytoplasmic side of the membrane. Serine 10, serine 22, and serine 23 each carry phosphoserine. The region spanning 64–309 (DKEVVAVSVA…LIPWLLSPES (246 aa)) is the GB1/RHD3-type G domain. GDP is bound by residues arginine 77, lysine 78, glycine 79, lysine 80, serine 81, phenylalanine 82, glutamine 148, arginine 217, aspartate 218, valine 276, and asparagine 279. Residues arginine 77, lysine 78, glycine 79, lysine 80, serine 81, and phenylalanine 82 each contribute to the GTP site. Serine 81 is a Mg(2+) binding site. The GTP site is built by arginine 217, aspartate 218, and valine 276. The tract at residues 347-438 (MLQATAEANN…YIQYIKHNDS (92 aa)) is 3HB (three-helix bundle) domain. An N6-acetyllysine modification is found at lysine 395. Positions 412–439 (EFSRRYLQQLESEIDELYIQYIKHNDSK) form a coiled coil. The segment at 439-447 (KNIFHAART) is linker. The helical transmembrane segment at 450-470 (TLFVVIFITYVIAGVTGFIGL) threads the bilayer. Position 471 (aspartate 471) is a topological domain, lumenal. The helical transmembrane segment at 472–492 (IIASLCNMIMGLTLITLCTWA) threads the bilayer. Residues 493–558 (YIRYSGEYRE…STEQSEKKKM (66 aa)) are Cytoplasmic-facing. The tract at residues 521–558 (NEALYKLYSAAATHRHLYHQAFPTPKSESTEQSEKKKM) is autoinhibitory domain.

This sequence belongs to the TRAFAC class dynamin-like GTPase superfamily. GB1/RHD3 GTPase family. GB1 subfamily. Monomeric and homodimeric. The homodimer, transiently formed by two molecules on opposing membranes, is the active form mediating ER membrane fusion. Interacts with REEP1, REEP5, RTN3 and RTN4 (via the transmembrane region); these proteins are involved in endoplasmic reticulum tubular network organization. Interacts with ZFYVE27; both proteins are involved in endoplasmic reticulum tubular network organization. Interacts with ARL6IP1; both proteins are involved in endoplasmic reticulum tubular network organization. Interacts with SPAST; the interaction is direct, could recruit SPAST to Golgi membranes. Interacts (via N-terminal region) with MAP4K4 (via CNH regulatory domain). May interact with TMED2. Interacts with CPT1C. Post-translationally, phosphorylated. Phosphorylation, by different kinases, of the N-terminal hypervariable region (HVR) regulates the ATL1-mediated membrane tethering step.

The protein localises to the endoplasmic reticulum membrane. It is found in the golgi apparatus membrane. It localises to the cell projection. The protein resides in the axon. It catalyses the reaction GTP + H2O = GDP + phosphate + H(+). Its function is as follows. Atlastin-1 (ATL1) is a membrane-anchored GTPase that mediates the GTP-dependent fusion of endoplasmic reticulum (ER) membranes, maintaining the continuous ER network. It facilitates the formation of three-way junctions where ER tubules intersect. Two atlastin-1 on neighboring ER tubules bind GTP and form loose homodimers through the GB1/RHD3-type G domains and 3HB regions. Upon GTP hydrolysis, the 3HB regions tighten, pulling the membranes together to drive their fusion. After fusion, the homodimer disassembles upon release of inorganic phosphate (Pi). Subsequently, GDP dissociates, resetting the monomers to a conformation ready for a new fusion cycle. May also regulate more or less directly Golgi biogenesis. Indirectly regulates axonal development. The chain is Atlastin-1 from Pongo abelii (Sumatran orangutan).